A 230-amino-acid polypeptide reads, in one-letter code: UPF0502 protein Patl_1161 (230 aa).

Belongs to the UPF0502 family.

The sequence is that of UPF0502 protein Patl_1161 from Pseudoalteromonas atlantica (strain T6c / ATCC BAA-1087).